Consider the following 899-residue polypeptide: Protein translocase subunit SecA (899 aa).

ATP-binding positions include Gln-87, 105–109 (GEGKT), and Asp-516. Cys-884, Cys-886, Cys-895, and His-896 together coordinate Zn(2+).

It belongs to the SecA family. As to quaternary structure, monomer and homodimer. Part of the essential Sec protein translocation apparatus which comprises SecA, SecYEG and auxiliary proteins SecDF. Other proteins may also be involved. Zn(2+) is required as a cofactor.

It is found in the cell inner membrane. The protein localises to the cytoplasm. It carries out the reaction ATP + H2O + cellular proteinSide 1 = ADP + phosphate + cellular proteinSide 2.. In terms of biological role, part of the Sec protein translocase complex. Interacts with the SecYEG preprotein conducting channel. Has a central role in coupling the hydrolysis of ATP to the transfer of proteins into and across the cell membrane, serving as an ATP-driven molecular motor driving the stepwise translocation of polypeptide chains across the membrane. The sequence is that of Protein translocase subunit SecA from Borreliella burgdorferi (strain ZS7) (Borrelia burgdorferi).